The following is a 369-amino-acid chain: S-(hydroxymethyl)glutathione dehydrogenase (369 aa).

Residues cysteine 40, histidine 62, cysteine 92, cysteine 95, cysteine 98, cysteine 106, and cysteine 169 each coordinate Zn(2+).

The protein belongs to the zinc-containing alcohol dehydrogenase family. Class-III subfamily. As to quaternary structure, homodimer. Zn(2+) serves as cofactor.

It is found in the cytoplasm. The enzyme catalyses S-(hydroxymethyl)glutathione + NADP(+) = S-formylglutathione + NADPH + H(+). The catalysed reaction is S-(hydroxymethyl)glutathione + NAD(+) = S-formylglutathione + NADH + H(+). It catalyses the reaction a primary alcohol + NAD(+) = an aldehyde + NADH + H(+). It carries out the reaction a secondary alcohol + NAD(+) = a ketone + NADH + H(+). The enzyme catalyses S-nitrosoglutathione + NADH + H(+) = S-(hydroxysulfenamide)glutathione + NAD(+). Its function is as follows. Has high formaldehyde dehydrogenase activity in the presence of glutathione and catalyzes the oxidation of normal alcohols in a reaction that is not GSH-dependent. In addition, hemithiolacetals other than those formed from GSH, including omega-thiol fatty acids, also are substrates. Also acts as a S-nitroso-glutathione reductase by catalyzing the NADH-dependent reduction of S-nitrosoglutathione. The sequence is that of S-(hydroxymethyl)glutathione dehydrogenase (frmA) from Escherichia coli (strain SMS-3-5 / SECEC).